A 237-amino-acid chain; its full sequence is 1-(5-phosphoribosyl)-5-[(5-phosphoribosylamino)methylideneamino] imidazole-4-carboxamide isomerase (237 aa).

The Proton acceptor role is filled by aspartate 8. The Proton donor role is filled by aspartate 129.

This sequence belongs to the HisA/HisF family.

It localises to the cytoplasm. It carries out the reaction 1-(5-phospho-beta-D-ribosyl)-5-[(5-phospho-beta-D-ribosylamino)methylideneamino]imidazole-4-carboxamide = 5-[(5-phospho-1-deoxy-D-ribulos-1-ylimino)methylamino]-1-(5-phospho-beta-D-ribosyl)imidazole-4-carboxamide. Its pathway is amino-acid biosynthesis; L-histidine biosynthesis; L-histidine from 5-phospho-alpha-D-ribose 1-diphosphate: step 4/9. The protein is 1-(5-phosphoribosyl)-5-[(5-phosphoribosylamino)methylideneamino] imidazole-4-carboxamide isomerase of Alkaliphilus metalliredigens (strain QYMF).